A 712-amino-acid polypeptide reads, in one-letter code: Amine oxidase [copper-containing] gamma 1 (712 aa).

The first 24 residues, 1–24, serve as a signal peptide directing secretion; the sequence is MAEPSFARLFLLFFSFLLIFATYS. 2 N-linked (GlcNAc...) asparagine glycosylation sites follow: asparagine 146 and asparagine 173. Cysteine 188 and cysteine 210 are oxidised to a cystine. 352–363 contacts substrate; the sequence is YMDAGELGLGPT. Aspartate 354 functions as the Proton acceptor in the catalytic mechanism. An intrachain disulfide couples cysteine 373 to cysteine 399. Substrate is bound at residue 439 to 444; sequence VGNYDY. Tyrosine 442 (schiff-base intermediate with substrate; via topaquinone) is an active-site residue. Tyrosine 442 is modified (2',4',5'-topaquinone). 2 residues coordinate Cu cation: histidine 499 and histidine 501. Mn(2+) contacts are provided by aspartate 508, methionine 509, and aspartate 510. Asparagine 516 and asparagine 617 each carry an N-linked (GlcNAc...) asparagine glycan. Mn(2+) is bound by residues aspartate 651 and isoleucine 652. Histidine 662 is a Cu cation binding site.

The protein belongs to the copper/topaquinone oxidase family. In terms of assembly, homodimer. The cofactor is Cu cation. Zn(2+) is required as a cofactor. L-topaquinone serves as cofactor. It depends on Mn(2+) as a cofactor. Post-translationally, topaquinone (TPQ) is generated by copper-dependent autoxidation of a specific tyrosyl residue. Mostly expressed in roots, stems and flowers, and, at lower levels, in leaves and cotyledons.

The protein localises to the secreted. It localises to the extracellular space. It is found in the apoplast. It catalyses the reaction a primary methyl amine + O2 + H2O = an aldehyde + H2O2 + NH4(+). It participates in amine and polyamine degradation; putrescine degradation. Copper amine oxidase that can use putrescine and spermidine as substrates. Required for abscisic acid- (ABA) and polyamine- (PA) and H(2)O(2)-dependent induced nitric oxide (NO) biosynthesis. Involved in ABA signal transduction and in responses to osmotic stress. The polypeptide is Amine oxidase [copper-containing] gamma 1 (Arabidopsis thaliana (Mouse-ear cress)).